Here is a 175-residue protein sequence, read N- to C-terminus: Putative carbonic anhydrase-like protein YbcF (175 aa).

The protein belongs to the beta-class carbonic anhydrase family.

The protein is Putative carbonic anhydrase-like protein YbcF (ybcF) of Bacillus subtilis (strain 168).